The sequence spans 163 residues: Steroid receptor-associated and regulated protein (163 aa).

The span at 1–16 (MAFSKDPRRTSLRDSS) shows a compositional bias: basic and acidic residues. Disordered stretches follow at residues 1–30 (MAFS…CAPK) and 96–149 (ALDG…EKVK). Residues 17–26 (VEMSSGTQPS) are compositionally biased toward polar residues.

In terms of assembly, interacts with 14-3-3 proteins.

Functionally, may regulate the transcriptional function of androgen and estrogen receptors. This is Steroid receptor-associated and regulated protein from Mus musculus (Mouse).